A 198-amino-acid chain; its full sequence is MPKVGMQPIRRQQLIEATMAAVNEVGMHEASIAQIAKRAGVSNGIISHYFRDKNGLLEATMRYLIRHLGEAVKQHLAALSVNDPRARLRAIAEGNFDDSQINSAAMKTWLAFWASSMHSPQLYRLQQVNNRRLYSNLCAEFKRCLPREQAQLAAKGMAGLIDGLWLRSALSGEHFNRQEALLIIHNYIEQQLNIKYKC.

Positions 8 to 68 constitute an HTH tetR-type domain; that stretch reads PIRRQQLIEA…ATMRYLIRHL (61 aa). Positions 31–50 form a DNA-binding region, H-T-H motif; it reads SIAQIAKRAGVSNGIISHYF.

It participates in amine and polyamine biosynthesis; betaine biosynthesis via choline pathway [regulation]. Repressor involved in the biosynthesis of the osmoprotectant glycine betaine. It represses transcription of the choline transporter BetT and the genes of BetAB involved in the synthesis of glycine betaine. This Yersinia pseudotuberculosis serotype O:1b (strain IP 31758) protein is HTH-type transcriptional regulator BetI.